Reading from the N-terminus, the 359-residue chain is DNA-directed RNA polymerase subunit alpha (359 aa).

Positions 1–226 (MLISQRPSLA…ELFGLARELN (226 aa)) are alpha N-terminal domain (alpha-NTD). Residues 241 to 359 (ADTIAAYAMP…GQDYAETEQL (119 aa)) form an alpha C-terminal domain (alpha-CTD) region. Residues 315-359 (FDPSAAAAEYPSEGWASETETVGGLGRVEDNGYDDGQDYAETEQL) are disordered. Residues 345 to 359 (NGYDDGQDYAETEQL) show a composition bias toward acidic residues.

It belongs to the RNA polymerase alpha chain family. As to quaternary structure, homodimer. The RNAP catalytic core consists of 2 alpha, 1 beta, 1 beta' and 1 omega subunit. When a sigma factor is associated with the core the holoenzyme is formed, which can initiate transcription.

The catalysed reaction is RNA(n) + a ribonucleoside 5'-triphosphate = RNA(n+1) + diphosphate. Its function is as follows. DNA-dependent RNA polymerase catalyzes the transcription of DNA into RNA using the four ribonucleoside triphosphates as substrates. This is DNA-directed RNA polymerase subunit alpha from Saccharopolyspora erythraea (strain ATCC 11635 / DSM 40517 / JCM 4748 / NBRC 13426 / NCIMB 8594 / NRRL 2338).